Consider the following 495-residue polypeptide: Ectonucleoside triphosphate diphosphohydrolase 2 (495 aa).

At 1 to 4 the chain is on the cytoplasmic side; the sequence is MAGK. The helical transmembrane segment at 5–25 threads the bilayer; it reads LVSLVPPLLLAAVGLAGLLLL. At 26–462 the chain is on the extracellular side; the sequence is CVPTQDVREP…PGLRKGTHFS (437 aa). N64 is a glycosylation site (N-linked (GlcNAc...) asparagine). Residues C75 and C99 are joined by a disulfide bond. Residue N129 is glycosylated (N-linked (GlcNAc...) asparagine). E165 acts as the Proton acceptor in catalysis. An ATP-binding site is contributed by 204–208; the sequence is GASTQ. Cystine bridges form between C242–C284 and C265–C310. 2 N-linked (GlcNAc...) asparagine glycosylation sites follow: N294 and N319. Disulfide bonds link C323–C328 and C377–C399. N-linked (GlcNAc...) asparagine glycans are attached at residues N378 and N443. A helical transmembrane segment spans residues 463–483; sequence SWVALLLLFTVLILAALVLLL. Topologically, residues 484 to 495 are cytoplasmic; that stretch reads RQVRSAKSPGAL.

It belongs to the GDA1/CD39 NTPase family. Ca(2+) is required as a cofactor. It depends on Mg(2+) as a cofactor.

The protein resides in the cell membrane. In terms of biological role, in the nervous system, could hydrolyze ATP and other nucleotides to regulate purinergic neurotransmission. Hydrolyzes ADP only to a marginal extent. This is Ectonucleoside triphosphate diphosphohydrolase 2 (Entpd2) from Mus musculus (Mouse).